The primary structure comprises 1161 residues: MDQKLGNKFLEPDPKQNVFYRPLHFQYVSYENFISYRLKEILSVNRTLLSFKNDTEKIVLRINNIKIIPPDYSPIIASIKGKSYDALVTFTVDIRKEVMTKDGLHVSTISSYEGNDSQLIKIPLLIGYGNKNPLDNSKFVSPNIIGGVFINKQSIEKVGINIVEKTTTWPKFKIVKPNAYTFSFSSISPVNILPTKYRHYKITMDLSQLENCYISSAKTFITVNVIVLIKFLINQDLNYIKNNLTYGMPLETIYLINAIIESSKTILEAEDFNINDYIESLIESEFQKQRSITSIDDFRYDLMYNFLPHMVNSSDQLKGFYLLGLLRKFIYCIYHTSRYPDRDSMVCHRVLTYGRYFEILANDELENYITNIKNDITNSHKNKGVCNVSIHVLTTPGFNHAFSGLLSGKFKKTDGSYRTHPHYSWMQNISIPRSVGYYPDQVKISKMFSVRKYHPSQYAFFCPSDVPERGPQVGLISQLSVLTSVSNIRTTEYIDLKNAIMKYIYTYDKNDISYFQTGHIITIENDLVAAINPELVDKFVDDFKFRKRVNYFDNLEIGISNVKDHMNEIRINIGSGRLIRPFLVVYKGELVMDTIGEELEKRIDTITFSDIQKEYPHVIEMLDLEQFVFSNVCESVSKFRELSDEDKKLYDYCDFPNEFRDGYVASTLVGINHNSGPRAILGCAQAKQAISCLSSDLRNKIDNGIHLLYPERPIVLSKATETSKIAINCFGQHVLVALMSYKGMNQEDGIVVKREFIERGGLDIVTAKKHQVEIPIENFKNRERINSTAYSKLDINGLVRLNAFLEPGDAIAKNISSRTLDDDFVADNQISFDISEKYTDMYMSRVERVQVDLTDKVKVRVLTMKERRPIMGDKFTSRTSQKGTIAYIASESELPYDKNGVTPDIIINSTSIYSRKTISMLIEMILTSAYSVKPYNNNGKNRPICFPSSNETDIEYYIEFARKCYQSAIPDLDKDELENEVYCESILYDPETDKPYKTKVFMGPLYYLRLRHLTQDKATVRCRGKKTKLIRQANEGRKRGGGIKFGEMERDCLIAHGAANTITEILKDSEEDYQDVYVCENCGDIATKKNNNVYCIRCTKLNLYTVLTKIDTTHVSKVFLTQMNARGIKINLTFNEQNPLFYKPMKQIDLSPTILKNHDLS.

It belongs to the RNA polymerase beta chain family. As to quaternary structure, the DNA-dependent RNA polymerase used for intermediate and late genes expression consists of eight subunits (147) kDa, (133) kDa, (35) kDa, (30) kDa, (22) kDa, (19) kDa, (18) kDa and (7) kDa totalling more than 500 kDa in mass. The same holoenzyme, with the addition of the transcription-specificity factor RAP94, is used for early gene expression.

Its subcellular location is the virion. The enzyme catalyses RNA(n) + a ribonucleoside 5'-triphosphate = RNA(n+1) + diphosphate. In terms of biological role, part of the DNA-dependent RNA polymerase which catalyzes the transcription of viral DNA into RNA using the four ribonucleoside triphosphates as substrates. Responsible for the transcription of early, intermediate and late genes. DNA-dependent RNA polymerase associates with the early transcription factor (ETF), itself composed of D6 and A7, thereby allowing the early genes transcription. Late transcription, and probably also intermediate transcription, require newly synthesized RNA polymerase. The polypeptide is DNA-directed RNA polymerase 132 kDa polypeptide (RPO132) (Fowlpox virus (strain NVSL) (FPV)).